The sequence spans 141 residues: D-aminoacyl-tRNA deacylase (141 aa).

The Gly-cisPro motif, important for rejection of L-amino acids motif lies at 133 to 134 (GP).

It belongs to the DTD family. As to quaternary structure, homodimer.

It localises to the cytoplasm. The catalysed reaction is glycyl-tRNA(Ala) + H2O = tRNA(Ala) + glycine + H(+). It catalyses the reaction a D-aminoacyl-tRNA + H2O = a tRNA + a D-alpha-amino acid + H(+). Functionally, an aminoacyl-tRNA editing enzyme that deacylates mischarged D-aminoacyl-tRNAs. Also deacylates mischarged glycyl-tRNA(Ala), protecting cells against glycine mischarging by AlaRS. Acts via tRNA-based rather than protein-based catalysis; rejects L-amino acids rather than detecting D-amino acids in the active site. By recycling D-aminoacyl-tRNA to D-amino acids and free tRNA molecules, this enzyme counteracts the toxicity associated with the formation of D-aminoacyl-tRNA entities in vivo and helps enforce protein L-homochirality. This is D-aminoacyl-tRNA deacylase from Kineococcus radiotolerans (strain ATCC BAA-149 / DSM 14245 / SRS30216).